We begin with the raw amino-acid sequence, 64 residues long: Delta-buthitoxin-Hj2a (64 aa).

4 disulfides stabilise this stretch: C12/C63, C16/C36, C22/C46, and C26/C48. R64 bears the Arginine amide mark.

The protein belongs to the long (4 C-C) scorpion toxin superfamily. Sodium channel inhibitor family. Alpha subfamily. As to expression, expressed by the venom gland.

It is found in the secreted. This non-amidated recombinant toxin slows fast inactivation on Nav1.1/SCN1A (EC(50)=52.8 nM), Nav1.4/SN4A (EC(50)=32 nM), Nav1.5/SCN5A (EC(50)=116.7 nM), Nav1.6/SCN8A (EC(50)=46.3 nM), and Nav1.7/SCN9A (EC(50)=147.4 nM) voltage-gated sodium channels. On Nav1.1/SCN1A channel, acts as an agonist by inducing a shift in both the voltage dependence of channel inactivation (alpha-toxin activity) and activation (beta-toxin activity). The sequence is that of Delta-buthitoxin-Hj2a from Hottentotta judaicus (Black scorpion).